A 294-amino-acid polypeptide reads, in one-letter code: MEGANVNEDERKYLRQIKHIIDEGDKVIDRTGVGTLSLFGLHSTYSLRNGVIPLLTTKRVYWKGVVEELLWFIKGDTDAKRLSAKGVKIWDANGSREFLDSQGFKDRPEGDLGPIYGFQWRHFGAEYHGTDADYKGQGVDQLADVIEQIKNNPNSRRIILNAWNVKDLHQMALPPCHTLAQFAVKNGELSCQLYQRSGDMGLGVPFNLASYGLLTHMIAHVCALKTGFLHHVLGDAHVYLNHIDALKEQLSRDPRPFPTVHFEGRIDSIDDFTAESIILNGYNPMAPIKMPMAV.

DUMP is bound by residues arginine 30 and arginine 156–arginine 157. The active-site Nucleophile is cysteine 176. Residues arginine 196–aspartate 199, asparagine 207, and histidine 237–tyrosine 239 each bind dUMP. Aspartate 199 is a binding site for (6R)-5,10-methylene-5,6,7,8-tetrahydrofolate. (6R)-5,10-methylene-5,6,7,8-tetrahydrofolate is bound at residue alanine 293.

This sequence belongs to the thymidylate synthase family. As to quaternary structure, homodimer.

The enzyme catalyses dUMP + (6R)-5,10-methylene-5,6,7,8-tetrahydrofolate = 7,8-dihydrofolate + dTMP. It functions in the pathway pyrimidine metabolism; dTTP biosynthesis. The chain is Thymidylate synthase from Ascaris suum (Pig roundworm).